We begin with the raw amino-acid sequence, 84 residues long: Molybdopterin synthase sulfur carrier subunit (84 aa).

Gly84 carries the 1-thioglycine; alternate modification. The residue at position 84 (Gly84) is a Glycyl adenylate; alternate.

Belongs to the MoaD family. MOCS2A subfamily. In terms of assembly, heterotetramer; composed of 2 small (MOCS2A) and 2 large (MOCS2B) subunits. C-terminal thiocarboxylation occurs in 2 steps, it is first acyl-adenylated (-COAMP) via the hesA/moeB/thiF part of MOCS3, then thiocarboxylated (-COSH) via the rhodanese domain of MOCS3.

Its subcellular location is the cytoplasm. It functions in the pathway cofactor biosynthesis; molybdopterin biosynthesis. In terms of biological role, acts as a sulfur carrier required for molybdopterin biosynthesis. Component of the molybdopterin synthase complex that catalyzes the conversion of precursor Z into molybdopterin by mediating the incorporation of 2 sulfur atoms into precursor Z to generate a dithiolene group. In the complex, serves as sulfur donor by being thiocarboxylated (-COSH) at its C-terminus by MOCS3. After interaction with MOCS2B, the sulfur is then transferred to precursor Z to form molybdopterin. This chain is Molybdopterin synthase sulfur carrier subunit, found in Caenorhabditis elegans.